Consider the following 217-residue polypeptide: Ribulose-phosphate 3-epimerase (217 aa).

A substrate-binding site is contributed by Ser6. The a divalent metal cation site is built by His29, Asp31, and His62. Catalysis depends on Asp31, which acts as the Proton acceptor. Substrate is bound by residues His62, 138 to 141 (GFGG), 171 to 173 (DGG), and 193 to 194 (GS). Position 171 (Asp171) interacts with a divalent metal cation. The active-site Proton donor is the Asp171.

It belongs to the ribulose-phosphate 3-epimerase family. It depends on a divalent metal cation as a cofactor.

The enzyme catalyses D-ribulose 5-phosphate = D-xylulose 5-phosphate. It functions in the pathway carbohydrate degradation. Its function is as follows. Catalyzes the reversible epimerization of D-ribulose 5-phosphate to D-xylulose 5-phosphate. The sequence is that of Ribulose-phosphate 3-epimerase from Helicobacter pylori (strain J99 / ATCC 700824) (Campylobacter pylori J99).